Consider the following 324-residue polypeptide: NADH-ubiquinone oxidoreductase chain 1 (324 aa).

8 helical membrane passes run 9–29 (VLNPLAYIVPVLLAVAFLTLL), 75–95 (FLFLATPMLALTLALTLWAPM), 106–126 (LGVLFVLALSSLAVYSILGSG), 146–166 (ISYEVSLGLILLSVIIFTGGF), 177–197 (SIWLVVPAWPLAALWYISTLA), 237–257 (ILLMNTLSAILFLGATHIPAL), 259–279 (ELTAMNLMTKAALLSVVFLWV), and 299–319 (FLPMTLALVLWHLALPIALAG).

Belongs to the complex I subunit 1 family.

It localises to the mitochondrion inner membrane. It catalyses the reaction a ubiquinone + NADH + 5 H(+)(in) = a ubiquinol + NAD(+) + 4 H(+)(out). Its function is as follows. Core subunit of the mitochondrial membrane respiratory chain NADH dehydrogenase (Complex I) that is believed to belong to the minimal assembly required for catalysis. Complex I functions in the transfer of electrons from NADH to the respiratory chain. The immediate electron acceptor for the enzyme is believed to be ubiquinone. This is NADH-ubiquinone oxidoreductase chain 1 (MT-ND1) from Thymallus arcticus (Arctic grayling).